A 267-amino-acid polypeptide reads, in one-letter code: Putative transcription factor Ovo-like 1 (267 aa).

4 C2H2-type zinc fingers span residues 118–140 (FTCH…MKCH), 146–168 (HLCT…VRTH), 174–197 (YKCS…KKIH), and 213–235 (YVCE…LKEH).

Its subcellular location is the nucleus. Functionally, putative transcription factor. Involved in hair formation and spermatogenesis. May function in the differentiation and/or maintenance of the urogenital system. This is Putative transcription factor Ovo-like 1 (OVOL1) from Bos taurus (Bovine).